A 596-amino-acid chain; its full sequence is MASSASLQRFLPPYPHAAASRCRPPGVRARPVQSSTVSAPSSSTPAADEAVSAERLEPRVEQREGRYWVLKEKYRTGLNPQEKVKLGKEPMSLFMEGGIKELAKMPMEEIEADKLSKEDIDVRLKWLGLFHRRKHQYGRFMMRLKLPNGVTTSEQTRYLASVIEAYGKEGCADVTTRQNWQIRGVTLPDVPAILDGLNAVGLTSLQSGMDNVRNPVGNPLAGIDPDEIVDTRSYTNLLSSYITSNFQGNPTITNLPRKWNVCVIGSHDLYEHPHINDLAYMPAVKGGKFGFNLLVGGFISPKRWEEALPLDAWVPGDDIIPVCKAVLEAYRDLGTRGNRQKTRMMWLIDELGMEAFRSEVEKRMPNGVLERAAPEDLIDKKWQRRDYLGVHPQKQEGMSYVGLHVPVGRVQAADMFELARLADEYGSGELRLTVEQNIVIPNVKNEKVEALLSEPLLQKFSPQPSLLLKGLVACTGNQFCGQAIIETKQRALLVTSQVEKLVSVPRAVRMHWTGCPNSCGQVQVADIGFMGCLTKDSAGKIVEAADIFVGGRVGSDSHLAGAYKKSVPCDELAPIVADILVERFGAVRREREEDEE.

The transit peptide at M1–R28 directs the protein to the chloroplast. Positions M1–L56 are disordered. A compositionally biased stretch (low complexity) spans P31–A47. C474, C480, C515, and C519 together coordinate [4Fe-4S] cluster. Siroheme is bound at residue C519.

Belongs to the nitrite and sulfite reductase 4Fe-4S domain family. Monomer. Requires siroheme as cofactor. The cofactor is [4Fe-4S] cluster.

It is found in the plastid. The protein resides in the chloroplast. The enzyme catalyses 6 oxidized [2Fe-2S]-[ferredoxin] + NH4(+) + 2 H2O = nitrite + 6 reduced [2Fe-2S]-[ferredoxin] + 8 H(+). The protein operates within nitrogen metabolism; nitrate reduction (assimilation). Its function is as follows. Catalyzes the six-electron reduction of nitrite to ammonium. This Oryza sativa subsp. japonica (Rice) protein is Ferredoxin--nitrite reductase, chloroplastic.